The following is a 369-amino-acid chain: P2X receptor B (369 aa).

Residues 1-25 (MTIDWDSILSYNTIKVVRIRDRRLG) lie on the Cytoplasmic side of the membrane. The chain crosses the membrane as a helical span at residues 26–46 (ILHLCFLIVIVLYVVVYSAII). Topologically, residues 47 to 369 (KKGYVTTEEP…DKLYHNIEAL (323 aa)) are lumenal. Positions 283 to 296 (RHAIRLIFIQTGVI) are pore-forming motif.

The protein belongs to the P2X receptor family.

Its subcellular location is the contractile vacuole membrane. Functionally, P2X receptors are ATP-gated ion channels that play a role in intracellular calcium signaling. Not required for the purinergic response to extracellular nucleotides. Not essential for osmoregulation. Inward currents are evoked by intracellular ATP and ATP analogs. Insensitive to the P2 receptor antagonists PPADS and suramin, and also copper ions. Inhibited by sodium ions. Permeable to chloride ions. This chain is P2X receptor B (p2xB), found in Dictyostelium discoideum (Social amoeba).